The chain runs to 218 residues: MGQKINPLGFRLGTTQSHHSFWFAKPKNFSIGLQEDERIRNCIKDYVKKNKKISSGFEGIAYIGIQKRIDFIQVIIYIGFPNLLIEGRTRGVEELQMNVQKEFHSVNRRLNIAITRIEKPYGQPNILAEYIALQLKNRVSFRKAMKKAIELTEQTGTKGIQVQIAGRIDGKEIARVEWIREGRVPLQTIRAKIDHCSHTVRTIYGILGIKIWIFVNQE.

In terms of domain architecture, KH type-2 spans 43 to 118 (IKDYVKKNKK…RLNIAITRIE (76 aa)).

It belongs to the universal ribosomal protein uS3 family. As to quaternary structure, part of the 30S ribosomal subunit.

The protein resides in the plastid. It localises to the chloroplast. The sequence is that of Small ribosomal subunit protein uS3c (rps3) from Phalaenopsis aphrodite subsp. formosana (Moth orchid).